The primary structure comprises 52 residues: KRGVTLREDDRFPCNAGNCACLPLDSYSYTCLSPTSSTANCESDECVSEDDW.

Residues 1-6 constitute a propeptide that is removed on maturation; the sequence is KRGVTL. Cystine bridges form between C14–C31, C19–C41, and C21–C46.

Expressed by the venom duct.

The protein resides in the secreted. Probable neurotoxin with unknown target. Possibly targets ion channels. This Californiconus californicus (California cone) protein is Conotoxin Cal9.2d.